Consider the following 695-residue polypeptide: NADPH--cytochrome P450 reductase (695 aa).

The Lumenal segment spans residues Met1–Asp8. The helical transmembrane segment at Val9–Val31 threads the bilayer. At Ala32–Ser695 the chain is on the cytoplasmic side. The 156-residue stretch at Cys66–Trp221 folds into the Flavodoxin-like domain. Residues Ser72–Ala77, Ala123–Gly126, Leu169–Asn178, and Asp204 each bind FMN. The 262-residue stretch at His277–Pro538 folds into the FAD-binding FR-type domain. Arg296 provides a ligand contact to NADP(+). FAD-binding positions include Arg451–Ser454, Thr469–Val471, and Gly486–Thr489. Residues Gln497–Gly516 are disordered. NADP(+) is bound by residues Thr552, Ser614–Arg615, Lys620–Gln624, and Glu656. Trp694 is an FAD binding site.

The protein belongs to the NADPH--cytochrome P450 reductase family. In the N-terminal section; belongs to the flavodoxin family. This sequence in the C-terminal section; belongs to the flavoprotein pyridine nucleotide cytochrome reductase family. FAD serves as cofactor. The cofactor is FMN.

It is found in the endoplasmic reticulum membrane. It localises to the mitochondrion outer membrane. The protein resides in the cell membrane. The enzyme catalyses 2 oxidized [cytochrome P450] + NADPH = 2 reduced [cytochrome P450] + NADP(+) + H(+). In terms of biological role, this enzyme is required for electron transfer from NADP to cytochrome P450 in microsomes. It can also provide electron transfer to heme oxygenase and cytochrome B5. Involved in ergosterol biosynthesis. This is NADPH--cytochrome P450 reductase from Emericella nidulans (strain FGSC A4 / ATCC 38163 / CBS 112.46 / NRRL 194 / M139) (Aspergillus nidulans).